A 150-amino-acid chain; its full sequence is Globin-2 (150 aa).

Positions 11 to 150 (PLSDAEKNKI…MICILLSSAY (140 aa)) constitute a Globin domain. 2 residues coordinate heme b: His74 and His106.

The protein belongs to the globin family. Monomer.

The protein is Globin-2 of Mordacia mordax (Southern hemisphere lamprey).